Here is a 325-residue protein sequence, read N- to C-terminus: Glycine--tRNA ligase alpha subunit (325 aa).

This sequence belongs to the class-II aminoacyl-tRNA synthetase family. In terms of assembly, tetramer of two alpha and two beta subunits.

It localises to the cytoplasm. The enzyme catalyses tRNA(Gly) + glycine + ATP = glycyl-tRNA(Gly) + AMP + diphosphate. This is Glycine--tRNA ligase alpha subunit from Ralstonia nicotianae (strain ATCC BAA-1114 / GMI1000) (Ralstonia solanacearum).